Consider the following 448-residue polypeptide: Fibulin-5 (448 aa).

The first 23 residues, 1-23, serve as a signal peptide directing secretion; that stretch reads MPGIKRILTVTILALCLPSPGNA. One can recognise an EGF-like 1; calcium-binding domain in the interval 42–82; the sequence is DIDECRTIPEACRGDMMCVNQNGGYLCIPRTNPVYRGPYSN. Disulfide bonds link Cys-46-Cys-59, Cys-53-Cys-68, Cys-131-Cys-144, Cys-138-Cys-153, Cys-155-Cys-166, Cys-172-Cys-181, Cys-177-Cys-190, Cys-192-Cys-205, Cys-211-Cys-221, Cys-217-Cys-230, Cys-232-Cys-245, Cys-251-Cys-262, Cys-258-Cys-271, Cys-273-Cys-286, Cys-292-Cys-305, Cys-299-Cys-314, and Cys-320-Cys-332. The short motif at 54–56 is the Cell attachment site element; the sequence is RGD. The 41-residue stretch at 127 to 167 folds into the EGF-like 2; calcium-binding domain; the sequence is DVDECATDSHQCNPTQICINTEGGYTCSCTDGYWLLEGQCL. The EGF-like 3; calcium-binding domain occupies 168 to 206; it reads DIDECRYGYCQQLCANVPGSYSCTCNPGFTLNEDGRSCQ. The region spanning 207-246 is the EGF-like 4; calcium-binding domain; it reads DVNECATENPCVQTCVNTYGSFICRCDPGYELEEDGVHCS. Positions 245-448 are interaction with LOXL1; the sequence is CSDMDECSFS…LRIYVSQYPF (204 aa). Positions 247–287 constitute an EGF-like 5; calcium-binding domain; it reads DMDECSFSEFLCQHECVNQPGTYFCSCPPGYILLDDNRSCQ. Residues Asn-283 and Asn-296 are each glycosylated (N-linked (GlcNAc...) asparagine). The EGF-like 6; calcium-binding domain occupies 288–333; it reads DINECEHRNHTCNLQQTCYNLQGGFKCIDPIRCEEPYLRISDNRCM.

Belongs to the fibulin family. In terms of assembly, homodimer. Monomer, homodimerizes in presence of Ca(2+). Interacts with ELN. Interacts (via N-terminus) with the integrins ITGAV/ITGB3, ITGAV/ITGB5 and ITGA9/ITGB1. Interacts with FBN1 (via N-terminal domain). Forms a ternary complex with ELN and FBN1. Interacts with EFEMP2 with moderate affinity. Interacts with LOXL1. N-glycosylated. In terms of tissue distribution, expressed in skin fibroblasts (at protein level). Expressed predominantly in heart, ovary, and colon but also in kidney, pancreas, testis, lung and placenta. Not detectable in brain, liver, thymus, prostate, or peripheral blood leukocytes.

The protein localises to the secreted. Its subcellular location is the extracellular space. The protein resides in the extracellular matrix. Essential for elastic fiber formation, is involved in the assembly of continuous elastin (ELN) polymer and promotes the interaction of microfibrils and ELN. Stabilizes and organizes elastic fibers in the skin, lung and vasculature. Promotes adhesion of endothelial cells through interaction of integrins and the RGD motif. Vascular ligand for integrin receptors which may play a role in vascular development and remodeling. May act as an adapter that mediates the interaction between FBN1 and ELN. The protein is Fibulin-5 (FBLN5) of Homo sapiens (Human).